Reading from the N-terminus, the 101-residue chain is Small ribosomal subunit protein uS14 (101 aa).

This sequence belongs to the universal ribosomal protein uS14 family. As to quaternary structure, part of the 30S ribosomal subunit. Contacts proteins S3 and S10.

Its function is as follows. Binds 16S rRNA, required for the assembly of 30S particles and may also be responsible for determining the conformation of the 16S rRNA at the A site. The sequence is that of Small ribosomal subunit protein uS14 from Enterobacter sp. (strain 638).